A 92-amino-acid chain; its full sequence is Long neurotoxin 3FTx-Oxy1 (92 aa).

Residues 1-21 (MKTLLLTLVVVTIVCLDLGYT) form the signal peptide. 5 disulfide bridges follow: cysteine 24–cysteine 42, cysteine 35–cysteine 63, cysteine 48–cysteine 52, cysteine 67–cysteine 79, and cysteine 80–cysteine 85.

Belongs to the three-finger toxin family. Long-chain subfamily. Type II alpha-neurotoxin sub-subfamily. As to expression, expressed by the venom gland.

It is found in the secreted. Its function is as follows. Binds with high affinity to muscular (alpha-1/CHRNA1) and neuronal (alpha-7/CHRNA7) nicotinic acetylcholine receptor (nAChR) and inhibits acetylcholine from binding to the receptor, thereby impairing neuromuscular and neuronal transmission. This is Long neurotoxin 3FTx-Oxy1 from Oxyuranus microlepidotus (Inland taipan).